A 252-amino-acid chain; its full sequence is MILHAQAKHGKPGLPWLVFLHGFSGDCHEWQEVGEAFADYSRLYVYLPGHGGSAAISVDGFDDVTDLLRKTLVSYNILNFWLVGYSLGGRVAMMAACQGMPGLCGVVVEGGHPGLQNAEQRAERQRSDRQWAQRFRTEPLTAVFADWYQQPVFASLNDDQRRELVALRSNNNGATLAAMLEATSLAVQPDLRANLSARTFAFYYLCGERDSKFRALAAELAADCHVIPRAGHNAHRENPAGVIASLAQILRF.

This sequence belongs to the AB hydrolase superfamily. MenH family. As to quaternary structure, monomer.

It carries out the reaction 5-enolpyruvoyl-6-hydroxy-2-succinyl-cyclohex-3-ene-1-carboxylate = (1R,6R)-6-hydroxy-2-succinyl-cyclohexa-2,4-diene-1-carboxylate + pyruvate. Its pathway is quinol/quinone metabolism; 1,4-dihydroxy-2-naphthoate biosynthesis; 1,4-dihydroxy-2-naphthoate from chorismate: step 3/7. The protein operates within quinol/quinone metabolism; menaquinone biosynthesis. Functionally, catalyzes a proton abstraction reaction that results in 2,5-elimination of pyruvate from 2-succinyl-5-enolpyruvyl-6-hydroxy-3-cyclohexene-1-carboxylate (SEPHCHC) and the formation of 2-succinyl-6-hydroxy-2,4-cyclohexadiene-1-carboxylate (SHCHC). The sequence is that of 2-succinyl-6-hydroxy-2,4-cyclohexadiene-1-carboxylate synthase from Shigella sonnei (strain Ss046).